The chain runs to 103 residues: MMSEKFALVLLVACIAFIGIETSPINSDSWKDGFCGENEAYDSMRRGCEERCDDHNPTFCFKFTTVCWCEKGYVRDKSDTCIKVEDCPNVSENLEFSETIIGM.

The N-terminal stretch at 1 to 22 is a signal peptide; that stretch reads MMSEKFALVLLVACIAFIGIET. One can recognise a TIL domain in the interval 35–87; it reads CGENEAYDSMRRGCEERCDDHNPTFCFKFTTVCWCEKGYVRDKSDTCIKVEDC.

This sequence belongs to the polydnaviridae EGF-like motif protein family.

The protein is Probable protease inhibitor Egf0.4b (O11) of Microplitis demolitor bracovirus (isolate Webb) (MdBV).